We begin with the raw amino-acid sequence, 194 residues long: Chromophore lyase CpcT/CpeT 1 (194 aa).

This sequence belongs to the CpcT/CpeT biliprotein lyase family.

Covalently attaches a chromophore to Cys residue(s) of phycobiliproteins. In Microcystis aeruginosa (strain NIES-843 / IAM M-2473), this protein is Chromophore lyase CpcT/CpeT 1.